A 273-amino-acid polypeptide reads, in one-letter code: Zinc finger protein 80 (273 aa).

7 C2H2-type zinc fingers span residues 49 to 71, 77 to 99, 103 to 127, 133 to 155, 161 to 183, 189 to 211, and 217 to 239; these read YKCK…QQIH, YECQ…VRIH, KPCK…HQIH, YECS…RMTH, FGCK…MKIH, YKCS…SMTH, and YECK…TRSH.

Belongs to the krueppel C2H2-type zinc-finger protein family.

The protein resides in the nucleus. In terms of biological role, may be involved in transcriptional regulation. This is Zinc finger protein 80 (ZNF80) from Pongo pygmaeus (Bornean orangutan).